The following is a 147-amino-acid chain: Shadow of prion protein (147 aa).

A signal peptide spans Met1–Ala24. Positions Gly26–Arg43 are enriched in gly residues. The tract at residues Gly26–Ser46 is disordered. N-linked (GlcNAc...) asparagine glycosylation occurs at Asn107. A lipid anchor (GPI-anchor amidated glycine) is attached at Gly122. The propeptide at Ser123 to Pro147 is removed in mature form.

The protein belongs to the SPRN family. N-glycosylated. In terms of tissue distribution, almost exclusively expressed in brain, with weak expression in lung and stomach.

The protein resides in the cell membrane. In terms of biological role, prion-like protein that has PrP(C)-like neuroprotective activity. May act as a modulator for the biological actions of normal and abnormal PrP. This chain is Shadow of prion protein (Sprn), found in Rattus norvegicus (Rat).